The chain runs to 276 residues: Malectin-A (276 aa).

The N-terminal stretch at 1–26 (MLSIRTVLGPLATILLTVLGPFGAHG) is a signal peptide. Residues 27–253 (SGLADKVIWA…TPNPYASDNS (227 aa)) lie on the Lumenal side of the membrane. 5 residues coordinate a carbohydrate: Tyr67, Tyr89, Tyr116, Phe117, and Asp186. The disordered stretch occupies residues 204-247 (PMLQPHPGLEKKEEEEEEEEEEGSTSKKQINKNRVQSGPRTPNP). Over residues 216–226 (EEEEEEEEEEG) the composition is skewed to acidic residues. The span at 229–247 (SKKQINKNRVQSGPRTPNP) shows a compositional bias: polar residues. A glycan (N-linked (GlcNAc...) asparagine) is linked at Asn252. The helical transmembrane segment at 254-274 (SLMFPILVAFGVFIPTLFCLC) threads the bilayer. Over 275–276 (RL) the chain is Cytoplasmic.

Belongs to the malectin family. As to expression, widely expressed throughout development including the anterior neuroectoderm and neural crest at stages 18 and 20, and the retina, hatching gland, otic vesicle, epibranchial placodes, pronephros and tail tip of later states. At stage 41, expressed in the liver, pancreas, branchial arches and proctodeum. Expressed broadly in adults in fat, intestine, gall bladder, eye, muscle, kidney, stomach, liver, heart, pancreas and lung.

Its subcellular location is the endoplasmic reticulum membrane. Functionally, carbohydrate-binding protein with a strong ligand preference for Glc2-N-glycan. May play a role in the early steps of protein N-glycosylation. Can bind di- or higher oligomers but not monomers of glucose, including maltose, maltotriose, maltotetraose, maltoheptaose, nigerose, kojibose, cellobiose and isomaltose, although based on their subcellular locations, these are unlikely to all be physiological ligands. The chain is Malectin-A from Xenopus laevis (African clawed frog).